The chain runs to 62 residues: Large ribosomal subunit protein uL30 (62 aa).

This sequence belongs to the universal ribosomal protein uL30 family. As to quaternary structure, part of the 50S ribosomal subunit.

The polypeptide is Large ribosomal subunit protein uL30 (Paracoccus denitrificans (strain Pd 1222)).